The sequence spans 150 residues: CASP-like protein 2 (150 aa).

Over 1 to 17 (MKPEAGDGRSGWRWVAT) the chain is Cytoplasmic. A helical membrane pass occupies residues 18-38 (FDLILRLAAIVATSTAVLAAM). Residues 39 to 41 (GKT) are Extracellular-facing. The helical transmembrane segment at 42–62 (FVVVVNGVACFYLLMSLPVSI) threads the bilayer. Residues 63 to 82 (FNIMRPGACPANRAVLTALD) lie on the Cytoplasmic side of the membrane. Residues 83-103 (MVTVALVTAGALVAGILYLVH) traverse the membrane as a helical segment. At 104–121 (KAGDTHADWFSIWSQLDS) the chain is on the extracellular side. A helical membrane pass occupies residues 122–142 (LSYLAVLALILHVLLSGSILY). At 143–150 (KQALNIMF) the chain is on the cytoplasmic side.

It belongs to the Casparian strip membrane proteins (CASP) family. In terms of assembly, homodimer and heterodimers.

It localises to the cell membrane. In Picea sitchensis (Sitka spruce), this protein is CASP-like protein 2.